Consider the following 130-residue polypeptide: D-ribose pyranase (130 aa).

His20 functions as the Proton donor in the catalytic mechanism. Substrate contacts are provided by residues Asp28, His97, and 119–121; that span reads YAN.

This sequence belongs to the RbsD / FucU family. RbsD subfamily. Homodecamer.

Its subcellular location is the cytoplasm. The enzyme catalyses beta-D-ribopyranose = beta-D-ribofuranose. It functions in the pathway carbohydrate metabolism; D-ribose degradation; D-ribose 5-phosphate from beta-D-ribopyranose: step 1/2. In terms of biological role, catalyzes the interconversion of beta-pyran and beta-furan forms of D-ribose. This Thermoanaerobacter pseudethanolicus (strain ATCC 33223 / 39E) (Clostridium thermohydrosulfuricum) protein is D-ribose pyranase.